We begin with the raw amino-acid sequence, 72 residues long: Large ribosomal subunit protein bL28 (72 aa).

This sequence belongs to the bacterial ribosomal protein bL28 family.

This chain is Large ribosomal subunit protein bL28, found in Chlorobaculum parvum (strain DSM 263 / NCIMB 8327) (Chlorobium vibrioforme subsp. thiosulfatophilum).